Consider the following 264-residue polypeptide: DNA repair protein RecO (264 aa).

This sequence belongs to the RecO family.

Functionally, involved in DNA repair and RecF pathway recombination. This chain is DNA repair protein RecO, found in Chlorobium luteolum (strain DSM 273 / BCRC 81028 / 2530) (Pelodictyon luteolum).